The chain runs to 391 residues: Acetyl-CoA acetyltransferase (391 aa).

The active-site Acyl-thioester intermediate is Cys-88. Residues His-347 and Cys-377 each act as proton acceptor in the active site.

Belongs to the thiolase-like superfamily. Thiolase family. Homotetramer.

The protein resides in the cytoplasm. It carries out the reaction 2 acetyl-CoA = acetoacetyl-CoA + CoA. The protein operates within metabolic intermediate biosynthesis; (R)-mevalonate biosynthesis; (R)-mevalonate from acetyl-CoA: step 1/3. This chain is Acetyl-CoA acetyltransferase (phaA), found in Paracoccus denitrificans.